Reading from the N-terminus, the 449-residue chain is Chromosomal replication initiator protein DnaA (449 aa).

The domain I, interacts with DnaA modulators stretch occupies residues 1-73 (MTQNPQWLWQ…TETIAELLQQ (73 aa)). The domain II stretch occupies residues 73 to 109 (QPVKVRLTSPEGNTLAATQSFYSSRSGQSTRPGKKTP). Over residues 90–103 (TQSFYSSRSGQSTR) the composition is skewed to polar residues. The disordered stretch occupies residues 90-110 (TQSFYSSRSGQSTRPGKKTPE). A domain III, AAA+ region region spans residues 110–326 (ELNSKYTFSR…GALLRAVTHI (217 aa)). ATP is bound by residues glycine 154, glycine 156, lysine 157, and threonine 158. Residues 327-449 (AISGLPMTVE…DRINHHHQNL (123 aa)) are domain IV, binds dsDNA.

The protein belongs to the DnaA family. Oligomerizes as a right-handed, spiral filament on DNA at oriC.

The protein resides in the cytoplasm. Plays an essential role in the initiation and regulation of chromosomal replication. ATP-DnaA binds to the origin of replication (oriC) to initiate formation of the DNA replication initiation complex once per cell cycle. Binds the DnaA box (a 9 base pair repeat at the origin) and separates the double-stranded (ds)DNA. Forms a right-handed helical filament on oriC DNA; dsDNA binds to the exterior of the filament while single-stranded (ss)DNA is stabiized in the filament's interior. The ATP-DnaA-oriC complex binds and stabilizes one strand of the AT-rich DNA unwinding element (DUE), permitting loading of DNA polymerase. After initiation quickly degrades to an ADP-DnaA complex that is not apt for DNA replication. Binds acidic phospholipids. This Picosynechococcus sp. (strain ATCC 27264 / PCC 7002 / PR-6) (Agmenellum quadruplicatum) protein is Chromosomal replication initiator protein DnaA.